Consider the following 320-residue polypeptide: Sucrose operon repressor (320 aa).

The HTH lacI-type domain occupies 1–55 (MKNIADIAKIAGVSKSTVSRYLNNGSVSLKTQQKLDEIIRENDYQPNQFAQSLRA). The segment at residues 4 to 23 (IADIAKIAGVSKSTVSRYLN) is a DNA-binding region (H-T-H motif).

Its function is as follows. Negative regulator of scrB expression. This Staphylococcus xylosus protein is Sucrose operon repressor (scrR).